We begin with the raw amino-acid sequence, 424 residues long: Microcin H47 secretion protein MchE (424 aa).

The Cytoplasmic portion of the chain corresponds to Met1–Pro25. Residues Leu26–Val46 traverse the membrane as a helical segment. Over Gly47–Asp424 the chain is Periplasmic.

The protein belongs to the membrane fusion protein (MFP) (TC 8.A.1) family.

It localises to the cell inner membrane. Functionally, probably involved, in conjunction with MchF, in the secretion of microcin H47. The polypeptide is Microcin H47 secretion protein MchE (mchE) (Escherichia coli).